Reading from the N-terminus, the 295-residue chain is Virginiamycin B lyase (295 aa).

Residue His-228 participates in substrate binding. Glu-268 is a Mg(2+) binding site. The active-site Proton acceptor is His-270. Mg(2+) is bound at residue Glu-285.

Belongs to the Vgb family. As to quaternary structure, monomer. Mg(2+) serves as cofactor.

Functionally, inactivates the type B streptogramin antibiotics by linearizing the lactone ring at the ester linkage, generating a free phenylglycine carboxylate and converting the threonyl moiety into 2-amino-butenoic acid. The protein is Virginiamycin B lyase of Clostridium beijerinckii (strain ATCC 51743 / NCIMB 8052) (Clostridium acetobutylicum).